The following is a 170-amino-acid chain: Cyclic dof factor 4 (170 aa).

Positions 25 to 51 are disordered; it reads NEEETHPPEQEATIAVRSSSSSDLTAE. A Dof-type zinc finger spans residues 58–112; it reads IACPRCKSMETKFCYFNNYNVNQPRHFCKGCHRYWTAGGALRNVPVGAGRRKSKP. Zn(2+)-binding residues include Cys-60, Cys-63, Cys-85, and Cys-88.

In terms of tissue distribution, expressed in the vasculature of cotyledons and hypocotyls, leaves and roots.

The protein resides in the nucleus. In terms of biological role, transcription factor that binds specifically to a 5'-AA[AG]G-3' consensus core sequence. Transcriptional repressor of 'CONSTANS' expression. Regulates a photoperiodic flowering response. The protein is Cyclic dof factor 4 (CDF4) of Arabidopsis thaliana (Mouse-ear cress).